Consider the following 110-residue polypeptide: MFGKGGIGNLMKQAQQMQEKMQQMQEEVAKLEVTGESGAGLVKVTINGAHNCRRVEIDPSLLVEDDKEMLEDLIAAALNDAARRIDETQKEKMASVSNGMQLPPGFKMPF.

The segment at 90 to 110 (KEKMASVSNGMQLPPGFKMPF) is disordered.

Belongs to the YbaB/EbfC family. In terms of assembly, homodimer.

It localises to the cytoplasm. The protein resides in the nucleoid. Binds to DNA and alters its conformation. May be involved in regulation of gene expression, nucleoid organization and DNA protection. The polypeptide is Nucleoid-associated protein YpAngola_A2890 (Yersinia pestis bv. Antiqua (strain Angola)).